Consider the following 162-residue polypeptide: MNKITHYFKSLLLLELLGGLWLTLKYTFKPKYTVLYPMEKFPQSPRFRGLHALRRYPNGEERCIACKLCEAVCPALAITIDSAKREDGTRRTTRYDIDLFKCIFCGFCEESCPVDSIVETHILEYHFEKRGENIVNKPQLLAIGDRLETEIAERRAADAAFR.

4Fe-4S ferredoxin-type domains are found at residues 53-83 (LRRY…IDSA) and 93-122 (TRYD…ETHI). Positions 63, 66, 69, 73, 102, 105, 108, and 112 each coordinate [4Fe-4S] cluster.

Belongs to the complex I 23 kDa subunit family. In terms of assembly, NDH-1 is composed of 14 different subunits. Subunits NuoA, H, J, K, L, M, N constitute the membrane sector of the complex. It depends on [4Fe-4S] cluster as a cofactor.

The protein resides in the cell inner membrane. The enzyme catalyses a quinone + NADH + 5 H(+)(in) = a quinol + NAD(+) + 4 H(+)(out). Its function is as follows. NDH-1 shuttles electrons from NADH, via FMN and iron-sulfur (Fe-S) centers, to quinones in the respiratory chain. The immediate electron acceptor for the enzyme in this species is believed to be ubiquinone. Couples the redox reaction to proton translocation (for every two electrons transferred, four hydrogen ions are translocated across the cytoplasmic membrane), and thus conserves the redox energy in a proton gradient. This is NADH-quinone oxidoreductase subunit I from Xanthomonas axonopodis pv. citri (strain 306).